The primary structure comprises 85 residues: Small ribosomal subunit protein uS15 (85 aa).

It belongs to the universal ribosomal protein uS15 family. Part of the 30S ribosomal subunit. Forms a bridge to the 50S subunit in the 70S ribosome, contacting the 23S rRNA.

One of the primary rRNA binding proteins, it binds directly to 16S rRNA where it helps nucleate assembly of the platform of the 30S subunit by binding and bridging several RNA helices of the 16S rRNA. In terms of biological role, forms an intersubunit bridge (bridge B4) with the 23S rRNA of the 50S subunit in the ribosome. The sequence is that of Small ribosomal subunit protein uS15 from Fusobacterium nucleatum subsp. nucleatum (strain ATCC 25586 / DSM 15643 / BCRC 10681 / CIP 101130 / JCM 8532 / KCTC 2640 / LMG 13131 / VPI 4355).